The chain runs to 1819 residues: Gamma-tubulin complex component 6 (1819 aa).

Disordered regions lie at residues 810–889, 929–951, and 1000–1023; these read SEAH…GARP, LPPSAPGEAPAAASTQPSRPQEY, and RETLLPSHPPRRAALEEGSSQPTE. 9 repeat units span residues 1027 to 1053, 1054 to 1080, 1081 to 1107, 1108 to 1134, 1135 to 1161, 1162 to 1188, 1189 to 1215, 1216 to 1242, and 1243 to 1269. Residues 1027–1269 are 9 X 27 AA tandem repeats; sequence GQVSGGGLPT…VSTRPRWNTH (243 aa). Residues 1271 to 1412 form a disordered region; that stretch reads PIPPPHMVLG…EAEASAAEAQ (142 aa). Polar residues predominate over residues 1297–1314; that stretch reads PPGHTSQSALSLGAQSTV. Residues 1321–1335 are compositionally biased toward low complexity; that stretch reads LPVEVGPSLSSPSSG. Positions 1384-1398 are enriched in polar residues; the sequence is WPLNSQEDTAAQSSP.

Belongs to the TUBGCP family. As to quaternary structure, component of the gamma-tubulin ring complex (gTuRC) consisting of TUBGCP2, TUBGCP3, TUBGCP4, TUBGCP5 and TUBGCP6 and gamma-tubulin TUBG1 or TUBG2. TUBGCP2, TUBGCP3, TUBGCP4, TUBGCP5 and TUBGCP6 assemble in a 5:5:2:1:1 stoichiometry; each is associated with a gamma-tubulin, thereby arranging 14 gamma-tubulins in a helical manner. Gamma-tubulin at the first position is blocked by TUBGCP3 at the last position, allowing 13 protafilaments to grow into a microtubule. The gTuRC (via TUBGCP3 and TUBGCP6) interacts with ACTB and MZT1; the interactions form a luminal bridge that stabilizes the initial structure during complex assembly. The gTuRC (via TUBGCP2) interacts with MZT2A/MZT2B and CDK5RAP2 (via CM1 motif); the interactions play a role in gTuRC activation.

The protein resides in the cytoplasm. The protein localises to the cytoskeleton. Its subcellular location is the microtubule organizing center. It localises to the centrosome. Its function is as follows. Component of the gamma-tubulin ring complex (gTuRC) which mediates microtubule nucleation. The gTuRC regulates the minus-end nucleation of alpha-beta tubulin heterodimers that grow into microtubule protafilaments, a critical step in centrosome duplication and spindle formation. This Homo sapiens (Human) protein is Gamma-tubulin complex component 6 (TUBGCP6).